Reading from the N-terminus, the 465-residue chain is Argininosuccinate lyase (465 aa).

The protein belongs to the lyase 1 family. Argininosuccinate lyase subfamily.

Its subcellular location is the cytoplasm. The enzyme catalyses 2-(N(omega)-L-arginino)succinate = fumarate + L-arginine. It functions in the pathway amino-acid biosynthesis; L-arginine biosynthesis; L-arginine from L-ornithine and carbamoyl phosphate: step 3/3. This is Argininosuccinate lyase from Nitrobacter winogradskyi (strain ATCC 25391 / DSM 10237 / CIP 104748 / NCIMB 11846 / Nb-255).